A 400-amino-acid chain; its full sequence is Endoglucanase 5A (400 aa).

A signal peptide spans 1–26 (MKKITTIFVVLLMTVALFSIGNTTAA). Residues H61, 65–66 (WY), Y92, and H127 each bind substrate. E165 (proton donor) is an active-site residue. Position 228 (Y228) interacts with substrate. E254 functions as the Nucleophile in the catalytic mechanism. Substrate contacts are provided by residues 260-261 (AT), W288, and 293-295 (KDE). The segment at 328-363 (ESASIPPSDPTPPSDPGEPDPTPPSDPGEYPAWDPN) is disordered. Residues 334 to 353 (PSDPTPPSDPGEPDPTPPSD) show a composition bias toward pro residues. Residues 357 to 396 (YPAWDPNQIYTNEIVYHNGQLWQAKWWTQNQEPGDPYGPW) form the Chitin-binding type-3 domain.

It belongs to the glycosyl hydrolase 5 (cellulase A) family. As to quaternary structure, monomer.

It is found in the secreted. The enzyme catalyses Endohydrolysis of (1-&gt;4)-beta-D-glucosidic linkages in cellulose, lichenin and cereal beta-D-glucans.. The chain is Endoglucanase 5A (cel5A) from Salipaludibacillus agaradhaerens (Bacillus agaradhaerens).